A 373-amino-acid chain; its full sequence is Phosphoserine aminotransferase (373 aa).

An L-glutamate-binding site is contributed by R46. Pyridoxal 5'-phosphate is bound by residues F104, T150, D172, and Q195. An N6-(pyridoxal phosphate)lysine modification is found at K196. Residue 247 to 248 participates in pyridoxal 5'-phosphate binding; that stretch reads NT.

Belongs to the class-V pyridoxal-phosphate-dependent aminotransferase family. SerC subfamily. In terms of assembly, homodimer. Requires pyridoxal 5'-phosphate as cofactor.

Its subcellular location is the cytoplasm. The catalysed reaction is O-phospho-L-serine + 2-oxoglutarate = 3-phosphooxypyruvate + L-glutamate. It carries out the reaction 4-(phosphooxy)-L-threonine + 2-oxoglutarate = (R)-3-hydroxy-2-oxo-4-phosphooxybutanoate + L-glutamate. The protein operates within amino-acid biosynthesis; L-serine biosynthesis; L-serine from 3-phospho-D-glycerate: step 2/3. Its pathway is cofactor biosynthesis; pyridoxine 5'-phosphate biosynthesis; pyridoxine 5'-phosphate from D-erythrose 4-phosphate: step 3/5. Catalyzes the reversible conversion of 3-phosphohydroxypyruvate to phosphoserine and of 3-hydroxy-2-oxo-4-phosphonooxybutanoate to phosphohydroxythreonine. The sequence is that of Phosphoserine aminotransferase from Rhodococcus jostii (strain RHA1).